The following is a 98-amino-acid chain: Defensin-like protein 192 (98 aa).

The N-terminal stretch at 1–27 (MATKSVSTFAIFFILVLAIFETPEIEA) is a signal peptide. 4 disulfides stabilise this stretch: Cys32/Cys86, Cys45/Cys69, Cys54/Cys81, and Cys58/Cys83.

This sequence belongs to the DEFL family. Protease inhibitor I18 (RTI/MTI-2) subfamily.

The protein resides in the secreted. This Arabidopsis thaliana (Mouse-ear cress) protein is Defensin-like protein 192 (ATTI7).